Here is a 636-residue protein sequence, read N- to C-terminus: Ketocytochalasin monooxygenase (636 aa).

Residues Asp125, 133-136, Asp145, Tyr151, and Ile195 each bind FAD; that span reads TWYW. 143-145 serves as a coordination point for NADP(+); sequence ACD. NADP(+) is bound by residues 279 to 285, 302 to 303, and 420 to 421; these read TGASAVQ, RT, and KR. Trp534 contacts FAD.

Belongs to the FAD-binding monooxygenase family. FAD serves as cofactor.

It carries out the reaction ketocytochalasin + NADPH + O2 + H(+) = iso-precytochalasin + NADP(+) + H2O. It catalyses the reaction iso-precytochalasin + NADPH + O2 + H(+) = cytochalasin Z16 + NADP(+) + H2O. Its pathway is mycotoxin biosynthesis. Ketocytochalasin monooxygenase; part of the gene cluster that mediates the biosynthesis of a family of the mycotoxins cytochalasins E and K. The hybrid PKS-NRPS synthetase ccsA and the enoyl reductase ccsC are responsible for fusion of phenylalanine with an octaketide backbone and subsequent release of the stable tetramic acid precursor. The polyketide synthase module (PKS) of the PKS-NRPS ccsA is responsible for the synthesis of the octaketide backbone. The downstream nonribosomal peptide synthetase (NRPS) amidates the carboxyl end of the octaketide with a phenylalanine. A reductase-like domain (R) at the C-terminus catalyzes the reductive release of the polyketide-amino acid intermediate. Because ccsA lacks a designated enoylreductase (ER) domain, the required activity is provided the enoyl reductase ccsC. Upon formation of the 11-membered carbocycle-fused perhydroisoindolone intermediate, a number of oxidative steps are required to afford the final cytochalasin E and K, including two hydroxylations at C17 and C18, one alcohol oxidation at C17, one epoxidation at C6 and C7 and two Baeyer-Villiger oxidations. The oxidative modification at C17, C18 and the C6-C7 epoxidation are likely to be catalyzed by the two cytochrome P450 oxygenases ccsD and ccsG. CcsD may be responsible for the epoxidation of the C6-C7 double bond. CcsG may be responsible for the successive oxidative modifications at C17 and C18. The double Baeyer-Villiger oxidations of ketocytochalasin to precytochalasin and cytochalasin Z(16) are among the final steps leading to cytochalasin E and K and are catalyzed by ccsB. The first oxygen insertion step follows that of the classic BVMO mechanism, generating the ester precytochalasin. Release of precytochalasin into an aqueous environment can generate the shunt product iso-precytochalasin through spontaneous isomerization. Alternatively, precytochalasin can undergo further oxidation by ccsB to yield the in-line carbonate-containing cytochalasin Z(16). Cytochalasin Z(16) is a precursor to cytochalasin E and cytochalasin K, whereas iso-precytochalasin is a precursor to cytochalasin Z(17) and rosellichalasin. The hydrolyase ccsE may catalyze hydrolysis of epoxide bond in cytochalasin E to afford cytochalasin K. The function of ccsF has not been assigned but it may play a role in post-PKS-NRPS biosynthetic step, resistance or transport of cytochalasins and related PKS-NRPS products. In Aspergillus clavatus (strain ATCC 1007 / CBS 513.65 / DSM 816 / NCTC 3887 / NRRL 1 / QM 1276 / 107), this protein is Ketocytochalasin monooxygenase.